Reading from the N-terminus, the 142-residue chain is Transcriptional regulator MraZ (142 aa).

SpoVT-AbrB domains are found at residues 5-51 and 77-120; these read ASAL…PRPE and AADV…DAAT.

The protein belongs to the MraZ family. Forms oligomers.

It localises to the cytoplasm. The protein resides in the nucleoid. This is Transcriptional regulator MraZ from Cupriavidus taiwanensis (strain DSM 17343 / BCRC 17206 / CCUG 44338 / CIP 107171 / LMG 19424 / R1) (Ralstonia taiwanensis (strain LMG 19424)).